The sequence spans 514 residues: Lysine--tRNA ligase (514 aa).

2 residues coordinate Mg(2+): Glu422 and Glu429.

This sequence belongs to the class-II aminoacyl-tRNA synthetase family. As to quaternary structure, homodimer. The cofactor is Mg(2+).

The protein localises to the cytoplasm. The catalysed reaction is tRNA(Lys) + L-lysine + ATP = L-lysyl-tRNA(Lys) + AMP + diphosphate. The polypeptide is Lysine--tRNA ligase (Psychrobacter arcticus (strain DSM 17307 / VKM B-2377 / 273-4)).